The chain runs to 279 residues: Urease accessory protein UreD (279 aa).

Belongs to the UreD family. As to quaternary structure, ureD, UreF and UreG form a complex that acts as a GTP-hydrolysis-dependent molecular chaperone, activating the urease apoprotein by helping to assemble the nickel containing metallocenter of UreC. The UreE protein probably delivers the nickel.

It is found in the cytoplasm. Functionally, required for maturation of urease via the functional incorporation of the urease nickel metallocenter. The polypeptide is Urease accessory protein UreD (Brucella suis (strain ATCC 23445 / NCTC 10510)).